The chain runs to 121 residues: Small ribosomal subunit protein uS13 (121 aa).

The disordered stretch occupies residues Gly94–Lys121. Residues Ala106–Lys121 are compositionally biased toward basic residues.

This sequence belongs to the universal ribosomal protein uS13 family. Part of the 30S ribosomal subunit. Forms a loose heterodimer with protein S19. Forms two bridges to the 50S subunit in the 70S ribosome.

Located at the top of the head of the 30S subunit, it contacts several helices of the 16S rRNA. In the 70S ribosome it contacts the 23S rRNA (bridge B1a) and protein L5 of the 50S subunit (bridge B1b), connecting the 2 subunits; these bridges are implicated in subunit movement. Contacts the tRNAs in the A and P-sites. The polypeptide is Small ribosomal subunit protein uS13 (Anoxybacillus flavithermus (strain DSM 21510 / WK1)).